The primary structure comprises 166 residues: Large ribosomal subunit protein mL49 (166 aa).

The segment at 56–78 (RIPDPPKHEHYPTPSGWQPPRDP) is disordered.

This sequence belongs to the mitochondrion-specific ribosomal protein mL49 family. Component of the mitochondrial large ribosomal subunit (mt-LSU). Mature mammalian 55S mitochondrial ribosomes consist of a small (28S) and a large (39S) subunit. The 28S small subunit contains a 12S ribosomal RNA (12S mt-rRNA) and 30 different proteins. The 39S large subunit contains a 16S rRNA (16S mt-rRNA), a copy of mitochondrial valine transfer RNA (mt-tRNA(Val)), which plays an integral structural role, and 52 different proteins. Interacts with OXA1L. In terms of tissue distribution, ubiquitous.

Its subcellular location is the mitochondrion. The sequence is that of Large ribosomal subunit protein mL49 (MRPL49) from Homo sapiens (Human).